The following is an 810-amino-acid chain: Phenylalanine--tRNA ligase beta subunit (810 aa).

Positions 39–154 (APPTEKIVVG…EGTPVGQDIR (116 aa)) constitute a tRNA-binding domain. A B5 domain is found at 405 to 480 (PQRAPVSMRA…RIYGFEKIPA (76 aa)). Mg(2+)-binding residues include D458, D464, E467, and E468. The 103-residue stretch at 707–809 (SKFPPVRRDI…MARVYGARLR (103 aa)) folds into the FDX-ACB domain.

Belongs to the phenylalanyl-tRNA synthetase beta subunit family. Type 1 subfamily. As to quaternary structure, tetramer of two alpha and two beta subunits. Requires Mg(2+) as cofactor.

The protein resides in the cytoplasm. The catalysed reaction is tRNA(Phe) + L-phenylalanine + ATP = L-phenylalanyl-tRNA(Phe) + AMP + diphosphate + H(+). The chain is Phenylalanine--tRNA ligase beta subunit from Burkholderia pseudomallei (strain 1710b).